The sequence spans 178 residues: Large ribosomal subunit protein uL10 (178 aa).

This sequence belongs to the universal ribosomal protein uL10 family. As to quaternary structure, part of the ribosomal stalk of the 50S ribosomal subunit. The N-terminus interacts with L11 and the large rRNA to form the base of the stalk. The C-terminus forms an elongated spine to which L12 dimers bind in a sequential fashion forming a multimeric L10(L12)X complex.

Functionally, forms part of the ribosomal stalk, playing a central role in the interaction of the ribosome with GTP-bound translation factors. This chain is Large ribosomal subunit protein uL10, found in Salinibacter ruber (strain DSM 13855 / M31).